Reading from the N-terminus, the 273-residue chain is Probable cysteine-rich repeat secretory protein 6 (273 aa).

Positions Met1–Ser21 are cleaved as a signal peptide. 2 Gnk2-homologous domains span residues Gln22–Phe122 and Asp128–Leu241.

Belongs to the cysteine-rich repeat secretory protein family.

Its subcellular location is the secreted. This chain is Probable cysteine-rich repeat secretory protein 6 (CRRSP6), found in Arabidopsis thaliana (Mouse-ear cress).